Here is a 500-residue protein sequence, read N- to C-terminus: NAD(P)H-quinone oxidoreductase chain 4, chloroplastic (500 aa).

The next 15 membrane-spanning stretches (helical) occupy residues 4-24, 31-51, 87-107, 111-131, 134-154, 167-187, 207-227, 242-262, 274-294, 305-325, 330-350, 358-378, 386-406, 416-436, and 462-482; these read LPWL…IPLF, IIRW…TYTF, IGPI…AWPV, PRLF…LFAS, ILLF…LISM, FILY…SMGL, VVLE…KLPI, HYST…YGLI, SLFS…AALT, IAYS…SMAD, GAIL…FLAG, TLFL…STMF, LALP…GIIT, IVIA…LLSM, and IFIS…PDLV.

This sequence belongs to the complex I subunit 4 family.

Its subcellular location is the plastid. The protein resides in the chloroplast thylakoid membrane. The enzyme catalyses a plastoquinone + NADH + (n+1) H(+)(in) = a plastoquinol + NAD(+) + n H(+)(out). The catalysed reaction is a plastoquinone + NADPH + (n+1) H(+)(in) = a plastoquinol + NADP(+) + n H(+)(out). The chain is NAD(P)H-quinone oxidoreductase chain 4, chloroplastic from Cycas taitungensis (Prince sago).